A 319-amino-acid chain; its full sequence is MNWLTNVVRPKIRNILKRETPDNLWIKCPDTGQLVFYKDVESNQFVIPGSNYHMRMSADARLKSIFDNETWYDVALPEVTADPLKFRDERKYVDRIRDARAKTGLHDSVKVGFGRLEGSAVVVAVQDFDFMGGSLGMAAGEAIVRGLELAVEKRCPFIVFAASGGARMQEGVLSLMQLPRTTVAVQMLREARQPYIVVLTNPTTGGVTASYAMLGDVQIAEPGALIGFAGARVIEQTIREKLPDGFQRAEYLRDHGMIDLVVHRHELRPTLARVCRLLTKAPEMIEQEPEPSAPVPPDEPDEPAATQEAPPAAPAAPPA.

The CoA carboxyltransferase N-terminal domain maps to 24 to 293 (LWIKCPDTGQ…MIEQEPEPSA (270 aa)). The interval 282 to 319 (PEMIEQEPEPSAPVPPDEPDEPAATQEAPPAAPAAPPA) is disordered.

It belongs to the AccD/PCCB family. In terms of assembly, acetyl-CoA carboxylase is a heterohexamer composed of biotin carboxyl carrier protein (AccB), biotin carboxylase (AccC) and two subunits each of ACCase subunit alpha (AccA) and ACCase subunit beta (AccD).

It localises to the cytoplasm. It catalyses the reaction N(6)-carboxybiotinyl-L-lysyl-[protein] + acetyl-CoA = N(6)-biotinyl-L-lysyl-[protein] + malonyl-CoA. It functions in the pathway lipid metabolism; malonyl-CoA biosynthesis; malonyl-CoA from acetyl-CoA: step 1/1. Component of the acetyl coenzyme A carboxylase (ACC) complex. Biotin carboxylase (BC) catalyzes the carboxylation of biotin on its carrier protein (BCCP) and then the CO(2) group is transferred by the transcarboxylase to acetyl-CoA to form malonyl-CoA. The chain is Acetyl-coenzyme A carboxylase carboxyl transferase subunit beta from Nitrobacter winogradskyi (strain ATCC 25391 / DSM 10237 / CIP 104748 / NCIMB 11846 / Nb-255).